The sequence spans 437 residues: Probable D-serine dehydratase (437 aa).

K106 carries the N6-(pyridoxal phosphate)lysine modification.

It belongs to the serine/threonine dehydratase family. DsdA subfamily. The cofactor is pyridoxal 5'-phosphate.

The catalysed reaction is D-serine = pyruvate + NH4(+). The chain is Probable D-serine dehydratase from Hahella chejuensis (strain KCTC 2396).